Consider the following 200-residue polypeptide: MTKQEKAENQEKPTEETVEETPKKETPFEPVMEADEVEETTEAQAPVEEADDKLAELQKKYDAMEDSFLRSQAEIKNIQMRNQKEQANLLKYDGQSLAKDVLPVLDNLERALAAEATDESAESLKKGVQMTYDHMKHALEDHGVKEIEAQGQAFDPTIHQAVQTVAVDGDQKADTVVQVFQKGYYLKDRVLRPAMVVVAQ.

Residues M1–P27 are compositionally biased toward basic and acidic residues. Residues M1–A50 form a disordered region. Acidic residues predominate over residues M32 to T41.

This sequence belongs to the GrpE family. Homodimer.

It localises to the cytoplasm. Its function is as follows. Participates actively in the response to hyperosmotic and heat shock by preventing the aggregation of stress-denatured proteins, in association with DnaK and GrpE. It is the nucleotide exchange factor for DnaK and may function as a thermosensor. Unfolded proteins bind initially to DnaJ; upon interaction with the DnaJ-bound protein, DnaK hydrolyzes its bound ATP, resulting in the formation of a stable complex. GrpE releases ADP from DnaK; ATP binding to DnaK triggers the release of the substrate protein, thus completing the reaction cycle. Several rounds of ATP-dependent interactions between DnaJ, DnaK and GrpE are required for fully efficient folding. In Latilactobacillus sakei subsp. sakei (strain 23K) (Lactobacillus sakei subsp. sakei), this protein is Protein GrpE.